A 488-amino-acid polypeptide reads, in one-letter code: Pre-glycoprotein polyprotein GP complex (488 aa).

G2 carries N-myristoyl glycine; by host lipidation. Residues 2–17 (GQLFSFFEEVPNIIHE) are Extracellular-facing. The helical transmembrane segment at 18 to 32 (AINIALIAVSLIAAL) threads the bilayer. K33 is a topological domain (cytoplasmic). A helical transmembrane segment spans residues 34–53 (GMINLWKSGLFQLIFFLTLA). Extracellular segments follow at residues 54–58 (GRSCS) and 59–427 (FRIG…TLVD). Residue C57 coordinates Zn(2+). N69, N88, N99, N125, N171, N178, and N222 each carry an N-linked (GlcNAc...) asparagine; by host glycan. Intrachain disulfides connect C85–C229, C274–C287, C296–C305, and C359–C380. N-linked (GlcNAc...) asparagine; by host glycans are attached at residues N360, N368, N385, and N390. The chain crosses the membrane as a helical span at residues 428–448 (ICFWSTLFFTTTLFLHLVGFP). Over 449–488 (THRHIRGEPCPLPHRLNSRGGCRCGKYPELKKPITWHKNH) the chain is Cytoplasmic. Positions 450, 452, 458, 462, 470, 472, and 488 each coordinate Zn(2+).

It belongs to the arenaviridae GPC protein family. In terms of assembly, homotetramer; disulfide-linked. Homotetramer. GP2 homotetramers bind through ionic interactions with GP1 homotetramers to form the GP complex together with the stable signal peptide. The GP-C polyprotein interacts with the host protease MBTPS1/SKI-1 resulting in the polyprotein processing. Specific enzymatic cleavages in vivo yield mature proteins. GP-C polyprotein is cleaved in the endoplasmic reticulum by the host protease MBTPS1. Only cleaved glycoprotein is incorporated into virions. Post-translationally, the SSP remains stably associated with the GP complex following cleavage by signal peptidase and plays crucial roles in the trafficking of GP through the secretory pathway. In terms of processing, myristoylation is necessary for GP2-mediated fusion activity.

It localises to the virion membrane. Its subcellular location is the host endoplasmic reticulum membrane. The protein resides in the host Golgi apparatus membrane. It is found in the host cell membrane. In terms of biological role, interacts with the host receptor. Mediates virus attachment to host TFRC. This attachment induces virion internalization predominantly through clathrin-mediated endocytosis. Class I viral fusion protein that directs fusion of viral and host endosomal membranes, leading to delivery of the nucleocapsid into the cytoplasm. Membrane fusion is mediated by irreversible conformational changes induced upon acidification in the endosome. Its function is as follows. Stable signal peptide (SSP): cleaved and functions as a signal peptide. In addition, it is also retained as the third component of the GP complex. The SSP is required for efficient glycoprotein expression, post-translational maturation cleavage of GP1 and GP2, glycoprotein transport to the cell surface plasma membrane, formation of infectious virus particles, and acid pH-dependent glycoprotein-mediated cell fusion. In Homo sapiens (Human), this protein is Pre-glycoprotein polyprotein GP complex.